The chain runs to 179 residues: Adenine phosphoribosyltransferase (179 aa).

It belongs to the purine/pyrimidine phosphoribosyltransferase family. In terms of assembly, homodimer.

The protein resides in the cytoplasm. The enzyme catalyses AMP + diphosphate = 5-phospho-alpha-D-ribose 1-diphosphate + adenine. Its pathway is purine metabolism; AMP biosynthesis via salvage pathway; AMP from adenine: step 1/1. Catalyzes a salvage reaction resulting in the formation of AMP, that is energically less costly than de novo synthesis. This chain is Adenine phosphoribosyltransferase, found in Helicobacter pylori (strain J99 / ATCC 700824) (Campylobacter pylori J99).